A 282-amino-acid polypeptide reads, in one-letter code: Succinate dehydrogenase [ubiquinone] iron-sulfur subunit, mitochondrial (282 aa).

The transit peptide at 1–26 (MAAVVFSLRRSGPVLRLSGALQVSRG) directs the protein to the mitochondrion. The 2Fe-2S ferredoxin-type domain maps to 42–135 (KKFAIYRWDP…VSKIYPLPHM (94 aa)). Positions 95, 100, 103, and 115 each coordinate [2Fe-2S] cluster. The 4Fe-4S ferredoxin-type domain occupies 178 to 208 (DRDKLDGLYECILCACCSTSCPSYWWNADKY). Residues Cys188, Cys191, and Cys194 each contribute to the [4Fe-4S] cluster site. Residue Cys198 participates in [3Fe-4S] cluster binding. Residue Trp203 participates in a ubiquinone binding. Residues Cys245 and Cys251 each contribute to the [3Fe-4S] cluster site. A [4Fe-4S] cluster-binding site is contributed by Cys255.

The protein belongs to the succinate dehydrogenase/fumarate reductase iron-sulfur protein family. Component of complex II composed of four subunits: the flavoprotein (FP) sdha, iron-sulfur protein (IP) sdhb, and a cytochrome b composed of sdhc and sdhd. The cofactor is [2Fe-2S] cluster. It depends on [3Fe-4S] cluster as a cofactor. [4Fe-4S] cluster is required as a cofactor.

Its subcellular location is the mitochondrion inner membrane. It carries out the reaction a quinone + succinate = fumarate + a quinol. It catalyses the reaction (R)-malate + a quinone = enol-oxaloacetate + a quinol. The catalysed reaction is (S)-malate + a quinone = enol-oxaloacetate + a quinol. The protein operates within carbohydrate metabolism; tricarboxylic acid cycle; fumarate from succinate (eukaryal route): step 1/1. Enol-oxaloacetate inhibits the succinate dehydrogenase activity. Iron-sulfur protein (IP) subunit of the succinate dehydrogenase complex (mitochondrial respiratory chain complex II), responsible for transferring electrons from succinate to ubiquinone (coenzyme Q). SDH also oxidizes malate to the non-canonical enol form of oxaloacetate, enol-oxaloacetate. Enol-oxaloacetate, which is a potent inhibitor of the succinate dehydrogenase activity, is further isomerized into keto-oxaloacetate. The protein is Succinate dehydrogenase [ubiquinone] iron-sulfur subunit, mitochondrial (sdhb) of Xenopus laevis (African clawed frog).